The chain runs to 308 residues: Aspartate carbamoyltransferase catalytic subunit (308 aa).

Positions 55 and 56 each coordinate carbamoyl phosphate. Lys83 contributes to the L-aspartate binding site. Residues Arg105, His133, and Gln136 each coordinate carbamoyl phosphate. L-aspartate is bound by residues Arg166 and Arg223. Residues Gly264 and Pro265 each coordinate carbamoyl phosphate.

It belongs to the aspartate/ornithine carbamoyltransferase superfamily. ATCase family. In terms of assembly, heterododecamer (2C3:3R2) of six catalytic PyrB chains organized as two trimers (C3), and six regulatory PyrI chains organized as three dimers (R2).

It catalyses the reaction carbamoyl phosphate + L-aspartate = N-carbamoyl-L-aspartate + phosphate + H(+). It functions in the pathway pyrimidine metabolism; UMP biosynthesis via de novo pathway; (S)-dihydroorotate from bicarbonate: step 2/3. Catalyzes the condensation of carbamoyl phosphate and aspartate to form carbamoyl aspartate and inorganic phosphate, the committed step in the de novo pyrimidine nucleotide biosynthesis pathway. The polypeptide is Aspartate carbamoyltransferase catalytic subunit (Salinispora arenicola (strain CNS-205)).